The sequence spans 74 residues: U4-theraphotoxin-Cg1a (74 aa).

The signal sequence occupies residues 1 to 19; sequence MNATIFAFLLLLNLAMHNA. Residues 20 to 39 constitute a propeptide that is removed on maturation; it reads TEQSSETDMDDTLLIPEINR. 3 cysteine pairs are disulfide-bonded: Cys42–Cys56, Cys49–Cys61, and Cys55–Cys71.

The protein belongs to the neurotoxin 36 family. 01 subfamily. In terms of tissue distribution, expressed by the venom gland.

The protein resides in the secreted. Functionally, probable ion channel inhibitor. The chain is U4-theraphotoxin-Cg1a from Chilobrachys guangxiensis (Chinese earth tiger tarantula).